A 264-amino-acid chain; its full sequence is MKQYLDLMKHILAEGVDKSDRTGTGTRSVFGYQMRFDLSKGFPLVSTKKCHMRSIIHELLWFLKGETNVAYLRENKVSIWDEWADDNGDLGPVYGAQWRSWPTQSGDAIDQISQVIAQIKSQPDSRRLIVSAWNVGELDKMALAPCHAFFQFYVADGKLSCQLYQRSCDVFLGLPFNIASYALLTMMVAQQCDLALGDFVWTGGDTHLYSNHMEQTALQLSREPMPLPTMTILRKPESIFDYQFDDFELTNYAPHPHIKAPVAV.

R21 lines the dUMP pocket. Residue H51 coordinates (6R)-5,10-methylene-5,6,7,8-tetrahydrofolate. Residue 126 to 127 (RR) coordinates dUMP. The Nucleophile role is filled by C146. DUMP is bound by residues 166 to 169 (RSCD), N177, and 207 to 209 (HLY). Residue D169 participates in (6R)-5,10-methylene-5,6,7,8-tetrahydrofolate binding. (6R)-5,10-methylene-5,6,7,8-tetrahydrofolate is bound at residue A263.

It belongs to the thymidylate synthase family. Bacterial-type ThyA subfamily. In terms of assembly, homodimer.

It localises to the cytoplasm. It carries out the reaction dUMP + (6R)-5,10-methylene-5,6,7,8-tetrahydrofolate = 7,8-dihydrofolate + dTMP. The protein operates within pyrimidine metabolism; dTTP biosynthesis. Its function is as follows. Catalyzes the reductive methylation of 2'-deoxyuridine-5'-monophosphate (dUMP) to 2'-deoxythymidine-5'-monophosphate (dTMP) while utilizing 5,10-methylenetetrahydrofolate (mTHF) as the methyl donor and reductant in the reaction, yielding dihydrofolate (DHF) as a by-product. This enzymatic reaction provides an intracellular de novo source of dTMP, an essential precursor for DNA biosynthesis. The sequence is that of Thymidylate synthase from Shewanella baltica (strain OS223).